The chain runs to 429 residues: tRNA(Ile2) 2-agmatinylcytidine synthetase TiaS (429 aa).

The OB DNA-binding region spans 271-343 (VRGKVIKKYW…LTLNLEKFYP (73 aa)).

This sequence belongs to the TiaS family.

The protein resides in the cytoplasm. The enzyme catalyses cytidine(34) in tRNA(Ile2) + agmatine + ATP + H2O = 2-agmatinylcytidine(34) in tRNA(Ile2) + AMP + 2 phosphate + 2 H(+). ATP-dependent agmatine transferase that catalyzes the formation of 2-agmatinylcytidine (agm2C) at the wobble position (C34) of tRNA(Ile2), converting the codon specificity from AUG to AUA. This Thermococcus sibiricus (strain DSM 12597 / MM 739) protein is tRNA(Ile2) 2-agmatinylcytidine synthetase TiaS.